Consider the following 306-residue polypeptide: Ribonuclease Z (306 aa).

Residues histidine 63, histidine 65, aspartate 67, histidine 68, histidine 141, aspartate 211, and histidine 269 each contribute to the Zn(2+) site. Residue aspartate 67 is the Proton acceptor of the active site.

Belongs to the RNase Z family. In terms of assembly, homodimer. Zn(2+) is required as a cofactor.

It carries out the reaction Endonucleolytic cleavage of RNA, removing extra 3' nucleotides from tRNA precursor, generating 3' termini of tRNAs. A 3'-hydroxy group is left at the tRNA terminus and a 5'-phosphoryl group is left at the trailer molecule.. Functionally, zinc phosphodiesterase, which displays some tRNA 3'-processing endonuclease activity. Probably involved in tRNA maturation, by removing a 3'-trailer from precursor tRNA. This Staphylococcus saprophyticus subsp. saprophyticus (strain ATCC 15305 / DSM 20229 / NCIMB 8711 / NCTC 7292 / S-41) protein is Ribonuclease Z.